Here is a 202-residue protein sequence, read N- to C-terminus: uncharacterized protein (202 aa).

The next 3 membrane-spanning stretches (helical) occupy residues 34–54 (AAYVISNTIIFGVYAIIQARI), 102–122 (MGVAIMAFMHLYMGYAQPLVI), and 125–145 (ILPLISLFTNNLVSIYIFNKA). A disordered region spans residues 165–202 (NKPAAAVTGTSSNSNNASAKSDGPTITELNENETEKSS). Positions 168-185 (AAAVTGTSSNSNNASAKS) are enriched in low complexity. Phosphoserine occurs at positions 185 and 201.

Belongs to the PHO88 family.

Its subcellular location is the endoplasmic reticulum membrane. This is an uncharacterized protein from Schizosaccharomyces pombe (strain 972 / ATCC 24843) (Fission yeast).